Here is a 167-residue protein sequence, read N- to C-terminus: NADH-quinone oxidoreductase subunit B 2 (167 aa).

Residues cysteine 39, cysteine 40, cysteine 104, and cysteine 134 each contribute to the [4Fe-4S] cluster site.

The protein belongs to the complex I 20 kDa subunit family. NDH-1 is composed of 14 different subunits. Subunits NuoB, C, D, E, F, and G constitute the peripheral sector of the complex. [4Fe-4S] cluster is required as a cofactor.

It localises to the cell inner membrane. It carries out the reaction a quinone + NADH + 5 H(+)(in) = a quinol + NAD(+) + 4 H(+)(out). Functionally, NDH-1 shuttles electrons from NADH, via FMN and iron-sulfur (Fe-S) centers, to quinones in the respiratory chain. Couples the redox reaction to proton translocation (for every two electrons transferred, four hydrogen ions are translocated across the cytoplasmic membrane), and thus conserves the redox energy in a proton gradient. The polypeptide is NADH-quinone oxidoreductase subunit B 2 (Burkholderia mallei (strain NCTC 10247)).